Consider the following 548-residue polypeptide: Chaperonin GroEL (548 aa).

ATP-binding positions include Thr-30 to Pro-33, Lys-51, Asp-87 to Thr-91, Gly-415, and Asp-495.

The protein belongs to the chaperonin (HSP60) family. As to quaternary structure, forms a cylinder of 14 subunits composed of two heptameric rings stacked back-to-back. Interacts with the co-chaperonin GroES.

It localises to the cytoplasm. The enzyme catalyses ATP + H2O + a folded polypeptide = ADP + phosphate + an unfolded polypeptide.. Together with its co-chaperonin GroES, plays an essential role in assisting protein folding. The GroEL-GroES system forms a nano-cage that allows encapsulation of the non-native substrate proteins and provides a physical environment optimized to promote and accelerate protein folding. This chain is Chaperonin GroEL, found in Yersinia pseudotuberculosis serotype O:1b (strain IP 31758).